Reading from the N-terminus, the 336-residue chain is Transmembrane protein 19 (336 aa).

6 consecutive transmembrane segments (helical) span residues 19–39 (IVILCMILCISLSFWIISITA), 49–69 (ISPWRWLVSVLTPIIIVWHGI), 86–106 (GFILTIANYSFFSALLTFFFI), 224–244 (ISSLLGGTSVGVAYFVTQLIF), 250–270 (IAAPQWPIVIYGGMAGLLGSL), and 313–333 (VNLFSSILIALLLPTAAWSFW).

Belongs to the TMEM19 family.

It localises to the membrane. This is Transmembrane protein 19 (tmem19) from Xenopus tropicalis (Western clawed frog).